We begin with the raw amino-acid sequence, 426 residues long: D-tagatose-1,6-bisphosphate aldolase subunit KbaZ (426 aa).

The protein belongs to the GatZ/KbaZ family. KbaZ subfamily. As to quaternary structure, forms a complex with KbaY.

It participates in carbohydrate metabolism; D-tagatose 6-phosphate degradation; D-glyceraldehyde 3-phosphate and glycerone phosphate from D-tagatose 6-phosphate: step 2/2. Its function is as follows. Component of the tagatose-1,6-bisphosphate aldolase KbaYZ that is required for full activity and stability of the Y subunit. Could have a chaperone-like function for the proper and stable folding of KbaY. When expressed alone, KbaZ does not show any aldolase activity. This Escherichia coli O6:K15:H31 (strain 536 / UPEC) protein is D-tagatose-1,6-bisphosphate aldolase subunit KbaZ.